A 593-amino-acid polypeptide reads, in one-letter code: Acetyl-coenzyme A transferase nodX (593 aa).

Residues 572-593 (DEDEQGSGFRSGSGLGSGSIAD) form a disordered region. Over residues 580–593 (FRSGSGLGSGSIAD) the composition is skewed to gly residues.

Belongs to the CoA-transferase III family.

It functions in the pathway secondary metabolite biosynthesis. Functionally, acetyl-coenzyme A transferase; part of the gene cluster that mediates the biosynthesis of the indole diterpenes nodulisporic acids (NA). Nodulisporic acid A (NAA) and its chemically modified derivatives are of particular significance because of their highly potent insecticidal activity against blood-feeding arthropods and lack of observable adverse effects on mammals, in particular the tremogenicity associated with the paspaline-derived IDTs is not observed. The geranylgeranyl diphosphate (GGPP) synthase ggs1, localized outside of the cluster, is proposed to catalyze the first step in nodulisporic acid biosynthesis via conversion of farnesyl pyrophosphate and isopentyl pyrophosphate into geranylgeranyl pyrophosphate (GGPP). Condensation of indole-3-glycerol phosphate with GGPP by the prenyl transferase nodC then forms 3-geranylgeranylindole (3-GGI). Epoxidation by the FAD-dependent monooxygenase nodM leads to a single-epoxidized-GGI that is substrate of the terpene cyclase nodB for cyclization to yield emindole SB. The terminal methyl carbon, C28, of emindole SB is then oxidized by the cytochrome P450 monooxygenase nodW to produce nodulisporic acid F (NAF), the pentacyclic core of NAA. NAF is converted to nodulisporic acid E (NAE) via prenylation. This step is probably performed by one of the indole diterpene prenyltransferases nodD1 or nodD2. Several oxidation steps performed by the FAD-linked oxidoreductase nodO and one of the cytochrome P450 monooxygenase nodR, nodX or nodZ further convert NAE to nodulisporic acid D (NAD). NAD is substrate of cytochrome P450 monooxygenase nodJ to produce the precursor of nodulisporic acid C (NAC), converted to NAC by one of the indole diterpene prenyltransferases nodD1 or nodD2. The FAD-dependent monooxygenase nodY2 then oxidizes NAC to nodulisporic acid B (NAB). Finally NAB is converted to NAA by one of the cytochrome P450 monooxygenases nodR, nodX or nodZ. This Hypoxylon pulicicidum protein is Acetyl-coenzyme A transferase nodX.